Consider the following 741-residue polypeptide: NAD(P)H-quinone oxidoreductase subunit 5, chloroplastic (741 aa).

A run of 16 helical transmembrane segments spans residues Trp9–Phe29, Trp40–Ile60, Ile89–Ile109, Phe125–Ile145, Val147–Thr167, Gly185–Phe205, Val221–Ser241, Thr258–Ala278, Leu280–Ile300, Leu327–Ile347, Ala354–Ser374, Thr396–Ser416, Leu425–Tyr445, Ile547–Pro567, Phe602–Cys622, and Ile720–Tyr740.

Belongs to the complex I subunit 5 family. NDH is composed of at least 16 different subunits, 5 of which are encoded in the nucleus.

The protein localises to the plastid. The protein resides in the chloroplast thylakoid membrane. The catalysed reaction is a plastoquinone + NADH + (n+1) H(+)(in) = a plastoquinol + NAD(+) + n H(+)(out). It catalyses the reaction a plastoquinone + NADPH + (n+1) H(+)(in) = a plastoquinol + NADP(+) + n H(+)(out). NDH shuttles electrons from NAD(P)H:plastoquinone, via FMN and iron-sulfur (Fe-S) centers, to quinones in the photosynthetic chain and possibly in a chloroplast respiratory chain. The immediate electron acceptor for the enzyme in this species is believed to be plastoquinone. Couples the redox reaction to proton translocation, and thus conserves the redox energy in a proton gradient. The polypeptide is NAD(P)H-quinone oxidoreductase subunit 5, chloroplastic (ndhF) (Arabis hirsuta (Hairy rock-cress)).